We begin with the raw amino-acid sequence, 532 residues long: 2,3-bisphosphoglycerate-independent phosphoglycerate mutase (532 aa).

The Mn(2+) site is built by D15 and S65. Catalysis depends on S65, which acts as the Phosphoserine intermediate. Substrate is bound by residues H126, 156–157, R188, R194, 258–261, and K331; these read RD and RPDR. Mn(2+) contacts are provided by D398, H402, D439, H440, and H457.

Belongs to the BPG-independent phosphoglycerate mutase family. In terms of assembly, monomer. The cofactor is Mn(2+).

The enzyme catalyses (2R)-2-phosphoglycerate = (2R)-3-phosphoglycerate. The protein operates within carbohydrate degradation; glycolysis; pyruvate from D-glyceraldehyde 3-phosphate: step 3/5. Catalyzes the interconversion of 2-phosphoglycerate and 3-phosphoglycerate. The protein is 2,3-bisphosphoglycerate-independent phosphoglycerate mutase of Synechococcus elongatus (strain ATCC 33912 / PCC 7942 / FACHB-805) (Anacystis nidulans R2).